The sequence spans 186 residues: Spermidine N(1)-acetyltransferase (186 aa).

The 161-residue stretch at 7–167 (VKLRPLERED…NAIRMCIFQH (161 aa)) folds into the N-acetyltransferase domain. Spermine is bound by residues methionine 30, glutamate 35, glutamate 43, and 51-54 (HIHD). Mg(2+) is bound at residue glutamate 35. Residues glutamate 35 and glutamate 43 each contribute to the spermidine site. Residue glutamate 76 participates in Mg(2+) binding. Residue 85-87 (EFQ) coordinates spermine. Residues 88 to 90 (III), 95 to 101 (QGKGLAT), and 128 to 137 (NEKAIHIYRK) each bind acetyl-CoA. The active-site Proton donor is tyrosine 135.

It belongs to the acetyltransferase family. As to quaternary structure, homododecamer.

The protein localises to the cytoplasm. The catalysed reaction is an alkane-alpha,omega-diamine + acetyl-CoA = an N-acetylalkane-alpha,omega-diamine + CoA + H(+). It carries out the reaction spermidine + acetyl-CoA = N(1)-acetylspermidine + CoA + H(+). It catalyses the reaction spermidine + acetyl-CoA = N(8)-acetylspermidine + CoA + H(+). The enzyme catalyses spermine + acetyl-CoA = N(1)-acetylspermine + CoA + H(+). Its pathway is amine and polyamine degradation; spermidine degradation. The protein operates within amine and polyamine degradation; spermine degradation. Involved in the protection against polyamine toxicity by regulating their concentration. Catalyzes the transfer of an acetyl group from acetyl coenzyme A (AcCoA) to the primary amino groups of spermidine to yield N(1)- and N(8)-acetylspermidine. It can also use spermine. The protein is Spermidine N(1)-acetyltransferase (speG) of Escherichia coli O157:H7.